Here is a 442-residue protein sequence, read N- to C-terminus: GTPase Der (442 aa).

EngA-type G domains lie at R2–N167 and F175–M351. GTP contacts are provided by residues G8–S15, D55–I59, N119–E122, G181–S188, D228–V232, and N293–D296. Residues R352–N436 form the KH-like domain.

It belongs to the TRAFAC class TrmE-Era-EngA-EngB-Septin-like GTPase superfamily. EngA (Der) GTPase family. As to quaternary structure, associates with the 50S ribosomal subunit.

In terms of biological role, GTPase that plays an essential role in the late steps of ribosome biogenesis. The polypeptide is GTPase Der (Ureaplasma urealyticum serovar 10 (strain ATCC 33699 / Western)).